Reading from the N-terminus, the 179-residue chain is Large ribosomal subunit protein uL5 (179 aa).

The protein belongs to the universal ribosomal protein uL5 family. In terms of assembly, part of the 50S ribosomal subunit; part of the 5S rRNA/L5/L18/L25 subcomplex. Contacts the 5S rRNA and the P site tRNA. Forms a bridge to the 30S subunit in the 70S ribosome.

Its function is as follows. This is one of the proteins that bind and probably mediate the attachment of the 5S RNA into the large ribosomal subunit, where it forms part of the central protuberance. In the 70S ribosome it contacts protein S13 of the 30S subunit (bridge B1b), connecting the 2 subunits; this bridge is implicated in subunit movement. Contacts the P site tRNA; the 5S rRNA and some of its associated proteins might help stabilize positioning of ribosome-bound tRNAs. This Prochlorococcus marinus (strain MIT 9211) protein is Large ribosomal subunit protein uL5.